We begin with the raw amino-acid sequence, 140 residues long: Protein NrdI (140 aa).

It belongs to the NrdI family.

In terms of biological role, probably involved in ribonucleotide reductase function. The chain is Protein NrdI from Ruegeria sp. (strain TM1040) (Silicibacter sp.).